We begin with the raw amino-acid sequence, 147 residues long: Cysteine proteinase inhibitor 2 (147 aa).

Residues 1–27 (MATMLKVSLVLSLLGFLVIAVVTPSAA) form the signal peptide. Residues 87–117 (LQFSRVVSAQKQVVAGLKYYLRIEVTQPNGS) enclose the Cystatin domain. The Secondary area of contact motif lies at 98–102 (QVVAG). Asparagine 115 carries N-linked (GlcNAc...) asparagine glycosylation.

It belongs to the cystatin family. Phytocystatin subfamily.

It is found in the secreted. Functionally, specific inhibitor of cysteine proteinases. Probably involved in the regulation of endogenous processes and in defense against pests and pathogens. The sequence is that of Cysteine proteinase inhibitor 2 (CYS2) from Arabidopsis thaliana (Mouse-ear cress).